The following is a 498-amino-acid chain: Probable cytosol aminopeptidase (498 aa).

K271 and D276 together coordinate Mn(2+). K283 is a catalytic residue. Mn(2+) is bound by residues D294, D353, and E355. Residue R357 is part of the active site.

It belongs to the peptidase M17 family. It depends on Mn(2+) as a cofactor.

The protein resides in the cytoplasm. The enzyme catalyses Release of an N-terminal amino acid, Xaa-|-Yaa-, in which Xaa is preferably Leu, but may be other amino acids including Pro although not Arg or Lys, and Yaa may be Pro. Amino acid amides and methyl esters are also readily hydrolyzed, but rates on arylamides are exceedingly low.. The catalysed reaction is Release of an N-terminal amino acid, preferentially leucine, but not glutamic or aspartic acids.. Its function is as follows. Presumably involved in the processing and regular turnover of intracellular proteins. Catalyzes the removal of unsubstituted N-terminal amino acids from various peptides. The polypeptide is Probable cytosol aminopeptidase (Bordetella petrii (strain ATCC BAA-461 / DSM 12804 / CCUG 43448)).